Consider the following 310-residue polypeptide: Ribosomal RNA small subunit methyltransferase H (310 aa).

S-adenosyl-L-methionine-binding positions include 33-35 (AGH), Asp-53, Phe-79, Asp-100, and Gln-107.

The protein belongs to the methyltransferase superfamily. RsmH family.

It is found in the cytoplasm. The enzyme catalyses cytidine(1402) in 16S rRNA + S-adenosyl-L-methionine = N(4)-methylcytidine(1402) in 16S rRNA + S-adenosyl-L-homocysteine + H(+). Its function is as follows. Specifically methylates the N4 position of cytidine in position 1402 (C1402) of 16S rRNA. In Clostridium botulinum (strain Alaska E43 / Type E3), this protein is Ribosomal RNA small subunit methyltransferase H.